The sequence spans 67 residues: Medusin-S1 (67 aa).

The first 22 residues, M1–C22, serve as a signal peptide directing secretion. Residues E23–R48 constitute a propeptide that is removed on maturation. The tract at residues K26–K47 is disordered. Acidic residues predominate over residues E31–R40. L66 bears the Leucine amide mark.

This sequence belongs to the frog skin active peptide (FSAP) family. Medusin subfamily. In terms of tissue distribution, expressed by the skin glands.

It localises to the secreted. Its subcellular location is the target cell membrane. Its function is as follows. Antibacterial peptide with moderate activity against the Gram-positive bacteria (S.aureus ATCC 25923, MIC=25 uM), but not against all other bacteria (both Gram-positive and Gram-negative) tested. Does not show activity against fungi, and against Leishmania species. It adopts an alpha-helical structure with very low amphipathicity in membrane environments. The chain is Medusin-S1 from Phyllomedusa sauvagei (Sauvage's leaf frog).